The sequence spans 275 residues: Ribosomal protein L11 methyltransferase (275 aa).

S-adenosyl-L-methionine contacts are provided by threonine 130, glycine 151, aspartate 172, and asparagine 213.

The protein belongs to the methyltransferase superfamily. PrmA family.

Its subcellular location is the cytoplasm. It catalyses the reaction L-lysyl-[protein] + 3 S-adenosyl-L-methionine = N(6),N(6),N(6)-trimethyl-L-lysyl-[protein] + 3 S-adenosyl-L-homocysteine + 3 H(+). Methylates ribosomal protein L11. The sequence is that of Ribosomal protein L11 methyltransferase from Wolinella succinogenes (strain ATCC 29543 / DSM 1740 / CCUG 13145 / JCM 31913 / LMG 7466 / NCTC 11488 / FDC 602W) (Vibrio succinogenes).